Here is a 1006-residue protein sequence, read N- to C-terminus: MSNSRNNRVMVEGVGARVVRGPDWKWGKQDGGEGHVGTVRSFESPEEVVVVWDNGTAANYRCSGAYDLRILDSAPTGIKHDGTMCDTCRQQPIIGIRWKCAECTNYDLCTVCYHGDKHHLRHRFYRITTPGSERVLLESRRKSKKITARGIFAGARVVRGVDWQWEDQDGGNGRRGKVTEIQDWSASSPHSAAYVLWDNGAKNLYRVGFEGMSDLKCVQDAKGGSFYRDHCPVLGEQNGNRNPGGLQIGDLVNIDLDLEIVQSLQHGHGGWTDGMFETLTTTGTVCGIDEDHDIVVQYPSGNRWTFNPAVLTKANIVRSGDAAQGAEGGTSQFQVGDLVQVCYDLERIKLLQRGHGEWAEAMLPTLGKVGRVQQIYSDSDLKVEVCGTSWTYNPAAVSKVASAGSAISNASGERLSQLLKKLFETQESGDLNEELVKAAANGDVAKVEDLLKRPDVDVNGQCAGHTAMQAASQNGHVDILKLLLKQNVDVEAEDKDGDRAVHHAAFGDEGAVIEVLHRGSADLNARNKRRQTPLHIAVNKGHLQVVKTLLDFGCHPSLQDSEGDTPLHDAISKKRDDILAVLLEAGADVTITNNNGFNALHHAALRGNPSAMRVLLSKLPRPWIVDEKKDDGYTALHLAALNNHVEVAELLVHQGNANLDIQNVNQQTALHLAVERQHTQIVRLLVRAGAKLDIQDKDGDTPLHEALRHHTLSQLRQLQDMQDVGKVDAAWEPSKNTLIMGLGTQGAEKKSAASIACFLAANGADLSIRNKKGQSPLDLCPDPNLCKALAKCHKEKVSGQVGSRSPSMISNDSETLEECMVCSDMKRDTLFGPCGHIATCSLCSPRVKKCLICKEQVQSRTKIEECVVCSDKKAAVLFQPCGHMCACENCANLMKKCVQCRAVVERRVPFIMCCGGKSSEDATDDISSGNIPVLQKDKDNTNVNADVQKLQQQLQDIKEQTMCPVCLDRLKNMIFLCGHGTCQLCGDRMSECPICRKAIERRILLY.

The 69-residue stretch at 6–74 (NNRVMVEGVG…AYDLRILDSA (69 aa)) folds into the MIB/HERC2 1 domain. The ZZ-type zinc finger occupies 80 to 132 (HDGTMCDTCRQQPIIGIRWKCAECTNYDLCTVCYHGDKHHLRHRFYRITTPGS). Cysteine 85, cysteine 88, cysteine 100, cysteine 103, cysteine 109, cysteine 112, histidine 118, and histidine 122 together coordinate Zn(2+). The region spanning 143–221 (SKKITARGIF…MSDLKCVQDA (79 aa)) is the MIB/HERC2 2 domain. Serine 408 carries the phosphoserine modification. ANK repeat units follow at residues 430 to 460 (DLNE…DVNG), 463 to 492 (AGHT…DVEA), 496 to 525 (DGDR…DLNA), 529 to 558 (RRQT…HPSL), 562 to 591 (EGDT…DVTI), 595 to 627 (NGFN…IVDE), 631 to 661 (DGYT…NLDI), 665 to 694 (NQQT…KLDI), and 698 to 729 (DGDT…KVDA). 2 consecutive RING-type zinc fingers follow at residues 819 to 854 (CMVC…LICK) and 866 to 901 (CVVC…VQCR). Residues 935–962 (QKDKDNTNVNADVQKLQQQLQDIKEQTM) are a coiled coil. Residues 963-996 (CPVCLDRLKNMIFLCGHGTCQLCGDRMSECPICR) form an RING-type 3 zinc finger.

In terms of assembly, interacts with CEP131 and PCM1. Ubiquitinated; possibly via autoubiquitination. Ubiquitinated; this modification is inhibited in response to cellular stress, such as ultraviolet light (UV) radiation or heat shock. In terms of tissue distribution, widely expressed at low level. Expressed at higher level in spinal cord, ovary, whole brain, and all specific brain regions examined.

It is found in the cytoplasm. It localises to the cytoskeleton. The protein localises to the microtubule organizing center. Its subcellular location is the centrosome. The protein resides in the centriolar satellite. It is found in the cell membrane. The catalysed reaction is S-ubiquitinyl-[E2 ubiquitin-conjugating enzyme]-L-cysteine + [acceptor protein]-L-lysine = [E2 ubiquitin-conjugating enzyme]-L-cysteine + N(6)-ubiquitinyl-[acceptor protein]-L-lysine.. The protein operates within protein modification; protein ubiquitination. Its function is as follows. E3 ubiquitin-protein ligase that mediates ubiquitination of Delta receptors, which act as ligands of Notch proteins. Positively regulates the Delta-mediated Notch signaling by ubiquitinating the intracellular domain of Delta, leading to endocytosis of Delta receptors. Probably mediates ubiquitination and subsequent proteasomal degradation of DAPK1, thereby antagonizing anti-apoptotic effects of DAPK1 to promote TNF-induced apoptosis. Involved in ubiquitination of centriolar satellite CEP131, CEP290 and PCM1 proteins and hence inhibits primary cilium formation in proliferating cells. Mediates 'Lys-63'-linked polyubiquitination of TBK1, which probably participates in kinase activation. In terms of biological role, (Microbial infection) During adenovirus infection, mediates ubiquitination of Core-capsid bridging protein. This allows viral genome delivery into nucleus for infection. In Homo sapiens (Human), this protein is E3 ubiquitin-protein ligase MIB1 (MIB1).